The primary structure comprises 181 residues: Monofunctional chorismate mutase (181 aa).

The N-terminal stretch at 1–20 is a signal peptide; it reads MIRHIAIFLCSLLMCSTTFA. Residues 21–102 form the Chorismate mutase domain; it reads DSVTSVSLGA…ASKAIQYRYL (82 aa). Substrate contacts are provided by arginine 38, lysine 49, aspartate 58, glutamate 62, and glutamine 98.

The protein localises to the periplasm. It catalyses the reaction chorismate = prephenate. It functions in the pathway metabolic intermediate biosynthesis; prephenate biosynthesis; prephenate from chorismate: step 1/1. Its function is as follows. Catalyzes the Claisen rearrangement of chorismate to prephenate. This is Monofunctional chorismate mutase from Salmonella typhimurium.